Consider the following 516-residue polypeptide: 2-isopropylmalate synthase (516 aa).

A Pyruvate carboxyltransferase domain is found at 8–270; the sequence is IYIFDTTLRD…YTGIKTESIY (263 aa). Mn(2+) is bound by residues aspartate 17, histidine 205, histidine 207, and asparagine 241. The tract at residues 394–516 is regulatory domain; sequence KLIYLNVVSG…DAGKIKSEYE (123 aa).

This sequence belongs to the alpha-IPM synthase/homocitrate synthase family. LeuA type 1 subfamily. In terms of assembly, homodimer. Mn(2+) is required as a cofactor.

It localises to the cytoplasm. The enzyme catalyses 3-methyl-2-oxobutanoate + acetyl-CoA + H2O = (2S)-2-isopropylmalate + CoA + H(+). It participates in amino-acid biosynthesis; L-leucine biosynthesis; L-leucine from 3-methyl-2-oxobutanoate: step 1/4. Its function is as follows. Catalyzes the condensation of the acetyl group of acetyl-CoA with 3-methyl-2-oxobutanoate (2-ketoisovalerate) to form 3-carboxy-3-hydroxy-4-methylpentanoate (2-isopropylmalate). This Syntrophus aciditrophicus (strain SB) protein is 2-isopropylmalate synthase.